A 131-amino-acid polypeptide reads, in one-letter code: MPVTDSIADYITRIRNAGRAKNKTTDIPYSKLRENISQLLQDKGYIKNFTVITTEKFPFIRIELKYTASGEPSIKEITRVSRPGRRTYEGKDIKKYLGGLGLYILSSSKGVITDKEAREQGVGGEILFRIY.

Belongs to the universal ribosomal protein uS8 family. As to quaternary structure, part of the 30S ribosomal subunit. Contacts proteins S5 and S12.

Its function is as follows. One of the primary rRNA binding proteins, it binds directly to 16S rRNA central domain where it helps coordinate assembly of the platform of the 30S subunit. This chain is Small ribosomal subunit protein uS8, found in Chlorobium luteolum (strain DSM 273 / BCRC 81028 / 2530) (Pelodictyon luteolum).